The following is a 156-amino-acid chain: ATP synthase subunit b (156 aa).

A helical membrane pass occupies residues 7–27; sequence LIGQTVAFIIFVWFCMKFVWP.

The protein belongs to the ATPase B chain family. In terms of assembly, F-type ATPases have 2 components, F(1) - the catalytic core - and F(0) - the membrane proton channel. F(1) has five subunits: alpha(3), beta(3), gamma(1), delta(1), epsilon(1). F(0) has three main subunits: a(1), b(2) and c(10-14). The alpha and beta chains form an alternating ring which encloses part of the gamma chain. F(1) is attached to F(0) by a central stalk formed by the gamma and epsilon chains, while a peripheral stalk is formed by the delta and b chains.

Its subcellular location is the cell inner membrane. F(1)F(0) ATP synthase produces ATP from ADP in the presence of a proton or sodium gradient. F-type ATPases consist of two structural domains, F(1) containing the extramembraneous catalytic core and F(0) containing the membrane proton channel, linked together by a central stalk and a peripheral stalk. During catalysis, ATP synthesis in the catalytic domain of F(1) is coupled via a rotary mechanism of the central stalk subunits to proton translocation. In terms of biological role, component of the F(0) channel, it forms part of the peripheral stalk, linking F(1) to F(0). The sequence is that of ATP synthase subunit b from Shewanella baltica (strain OS155 / ATCC BAA-1091).